Consider the following 92-residue polypeptide: Putative regulatory protein CKL_1364 (92 aa).

This sequence belongs to the RemA family.

This Clostridium kluyveri (strain ATCC 8527 / DSM 555 / NBRC 12016 / NCIMB 10680 / K1) protein is Putative regulatory protein CKL_1364.